Reading from the N-terminus, the 357-residue chain is Elongation factor Ts (357 aa).

The segment at 82–85 (TDFV) is involved in Mg(2+) ion dislocation from EF-Tu.

It belongs to the EF-Ts family.

The protein localises to the cytoplasm. Associates with the EF-Tu.GDP complex and induces the exchange of GDP to GTP. It remains bound to the aminoacyl-tRNA.EF-Tu.GTP complex up to the GTP hydrolysis stage on the ribosome. The sequence is that of Elongation factor Ts from Campylobacter jejuni subsp. jejuni serotype O:6 (strain 81116 / NCTC 11828).